Consider the following 435-residue polypeptide: Methylenetetrahydrofolate--tRNA-(uracil-5-)-methyltransferase TrmFO (435 aa).

Residue 7-12 participates in FAD binding; that stretch reads GAGLAG.

The protein belongs to the MnmG family. TrmFO subfamily. FAD serves as cofactor.

It localises to the cytoplasm. It catalyses the reaction uridine(54) in tRNA + (6R)-5,10-methylene-5,6,7,8-tetrahydrofolate + NADH + H(+) = 5-methyluridine(54) in tRNA + (6S)-5,6,7,8-tetrahydrofolate + NAD(+). The catalysed reaction is uridine(54) in tRNA + (6R)-5,10-methylene-5,6,7,8-tetrahydrofolate + NADPH + H(+) = 5-methyluridine(54) in tRNA + (6S)-5,6,7,8-tetrahydrofolate + NADP(+). Its function is as follows. Catalyzes the folate-dependent formation of 5-methyl-uridine at position 54 (M-5-U54) in all tRNAs. This Thermotoga sp. (strain RQ2) protein is Methylenetetrahydrofolate--tRNA-(uracil-5-)-methyltransferase TrmFO.